The chain runs to 431 residues: Phosphomethylpyrimidine synthase (431 aa).

Substrate contacts are provided by residues Asn-66, Met-95, Tyr-124, His-163, 185–187 (SRG), 226–229 (DGLR), and Glu-265. Residue His-269 participates in Zn(2+) binding. Tyr-292 is a substrate binding site. His-333 is a Zn(2+) binding site. [4Fe-4S] cluster-binding residues include Cys-408, Cys-411, and Cys-415.

The protein belongs to the ThiC family. [4Fe-4S] cluster is required as a cofactor.

The enzyme catalyses 5-amino-1-(5-phospho-beta-D-ribosyl)imidazole + S-adenosyl-L-methionine = 4-amino-2-methyl-5-(phosphooxymethyl)pyrimidine + CO + 5'-deoxyadenosine + formate + L-methionine + 3 H(+). Its pathway is cofactor biosynthesis; thiamine diphosphate biosynthesis. Functionally, catalyzes the synthesis of the hydroxymethylpyrimidine phosphate (HMP-P) moiety of thiamine from aminoimidazole ribotide (AIR) in a radical S-adenosyl-L-methionine (SAM)-dependent reaction. This is Phosphomethylpyrimidine synthase from Dehalococcoides mccartyi (strain ATCC BAA-2100 / JCM 16839 / KCTC 5957 / BAV1).